Reading from the N-terminus, the 581-residue chain is Arginine--tRNA ligase (581 aa).

A 'HIGH' region motif is present at residues 126 to 136 (PNLAKEMHVGH).

The protein belongs to the class-I aminoacyl-tRNA synthetase family. Monomer.

The protein localises to the cytoplasm. The enzyme catalyses tRNA(Arg) + L-arginine + ATP = L-arginyl-tRNA(Arg) + AMP + diphosphate. The sequence is that of Arginine--tRNA ligase from Shewanella sp. (strain MR-4).